Reading from the N-terminus, the 457-residue chain is MALWGGRFTQAADQRFKQFNDSLRFDYRLAEQDIVGSVAWSKALVTVGVLSAAEQQQLEEALNVLLEEVRANPQQILASDAEDIHSWVEGKLIDKVGQLGKKLHTGRSRNDQVATDLKLWCKDTVVELLSANRQLQSALVETAQQNQDAVMPGYTHLQRAQPVTFAHWCLAYVEMLARDESRLQDALKRLDVSPLGCGALAGTAYEIDREQLAGWLGFASATRNSLDSVSDRDHVLELLSDAAIGMVHLSRFAEDLIFFNSGEANFVELSDRVTSGSSLMPQKKNPDALELIRGKCGRVQGALTGMMMTLKGLPLAYNKDMQEDKEGLFDALDTWLDCLHMAALVLDGIQVKRPRCAEAAQQGYANATELADYLVAKGVPFREAHHIVGEAVVEAIAQGKPLEALTLADLQKFSPVIADDVYPILSLQSCLEKRAAKGGVSPQQVAQAINEAKARLS.

This sequence belongs to the lyase 1 family. Argininosuccinate lyase subfamily.

The protein localises to the cytoplasm. The catalysed reaction is 2-(N(omega)-L-arginino)succinate = fumarate + L-arginine. It functions in the pathway amino-acid biosynthesis; L-arginine biosynthesis; L-arginine from L-ornithine and carbamoyl phosphate: step 3/3. This chain is Argininosuccinate lyase, found in Klebsiella pneumoniae subsp. pneumoniae (strain ATCC 700721 / MGH 78578).